A 512-amino-acid chain; its full sequence is Bifunctional purine biosynthesis protein PurH (512 aa).

An MGS-like domain is found at 1 to 146; sequence MTIKRALISV…KNHQDVTVIV (146 aa).

Belongs to the PurH family.

The catalysed reaction is (6R)-10-formyltetrahydrofolate + 5-amino-1-(5-phospho-beta-D-ribosyl)imidazole-4-carboxamide = 5-formamido-1-(5-phospho-D-ribosyl)imidazole-4-carboxamide + (6S)-5,6,7,8-tetrahydrofolate. It catalyses the reaction IMP + H2O = 5-formamido-1-(5-phospho-D-ribosyl)imidazole-4-carboxamide. It functions in the pathway purine metabolism; IMP biosynthesis via de novo pathway; 5-formamido-1-(5-phospho-D-ribosyl)imidazole-4-carboxamide from 5-amino-1-(5-phospho-D-ribosyl)imidazole-4-carboxamide (10-formyl THF route): step 1/1. Its pathway is purine metabolism; IMP biosynthesis via de novo pathway; IMP from 5-formamido-1-(5-phospho-D-ribosyl)imidazole-4-carboxamide: step 1/1. This is Bifunctional purine biosynthesis protein PurH from Bacillus subtilis (strain 168).